Here is a 166-residue protein sequence, read N- to C-terminus: Phosphopantetheine adenylyltransferase (166 aa).

Ser11 lines the substrate pocket. ATP contacts are provided by residues 11 to 12 and His19; that span reads SF. Residues Lys43, Leu75, and Arg89 each contribute to the substrate site. ATP contacts are provided by residues 90–92, Glu100, and 125–131; these read GLR and YGYLSSS.

It belongs to the bacterial CoaD family. In terms of assembly, homohexamer. The cofactor is Mg(2+).

The protein localises to the cytoplasm. The catalysed reaction is (R)-4'-phosphopantetheine + ATP + H(+) = 3'-dephospho-CoA + diphosphate. Its pathway is cofactor biosynthesis; coenzyme A biosynthesis; CoA from (R)-pantothenate: step 4/5. Functionally, reversibly transfers an adenylyl group from ATP to 4'-phosphopantetheine, yielding dephospho-CoA (dPCoA) and pyrophosphate. This Syntrophotalea carbinolica (strain DSM 2380 / NBRC 103641 / GraBd1) (Pelobacter carbinolicus) protein is Phosphopantetheine adenylyltransferase.